Reading from the N-terminus, the 494-residue chain is 4-trimethylaminobutyraldehyde dehydrogenase (494 aa).

Serine 2 carries the post-translational modification N-acetylserine. Lysine 30 bears the N6-acetyllysine; alternate mark. Position 30 is an N6-succinyllysine; alternate (lysine 30). N6-succinyllysine is present on lysine 59. NAD(+) is bound by residues lysine 180 and 232–236 (GSVPT). Glutamate 254 (proton acceptor) is an active-site residue. Cysteine 288 acts as the Nucleophile in catalysis. An N6-acetyllysine modification is found at lysine 298. Glutamate 391 provides a ligand contact to NAD(+).

The protein belongs to the aldehyde dehydrogenase family. In terms of assembly, homotetramer. In terms of tissue distribution, detected in lever (at protein level).

The protein localises to the cytoplasm. It is found in the cytosol. The enzyme catalyses 4-(trimethylamino)butanal + NAD(+) + H2O = 4-(trimethylamino)butanoate + NADH + 2 H(+). It catalyses the reaction an aldehyde + NAD(+) + H2O = a carboxylate + NADH + 2 H(+). It carries out the reaction 4-aminobutanal + NAD(+) + H2O = 4-aminobutanoate + NADH + 2 H(+). The catalysed reaction is formaldehyde + NAD(+) + H2O = formate + NADH + 2 H(+). The enzyme catalyses acetaldehyde + NAD(+) + H2O = acetate + NADH + 2 H(+). It catalyses the reaction imidazole-4-acetaldehyde + NAD(+) + H2O = imidazole-4-acetate + NADH + 2 H(+). It carries out the reaction acrolein + NAD(+) + H2O = acrylate + NADH + 2 H(+). The catalysed reaction is (5-hydroxyindol-3-yl)acetaldehyde + NAD(+) + H2O = (5-hydroxyindol-3-yl)acetate + NADH + 2 H(+). The enzyme catalyses 3,4-dihydroxyphenylacetaldehyde + NAD(+) + H2O = 3,4-dihydroxyphenylacetate + NADH + 2 H(+). It catalyses the reaction spermine monoaldehyde + NAD(+) + H2O = N-(2-carboxyethyl)spermidine + NADH + 2 H(+). It carries out the reaction propanal + NAD(+) + H2O = propanoate + NADH + 2 H(+). The catalysed reaction is butanal + NAD(+) + H2O = butanoate + NADH + 2 H(+). The enzyme catalyses pentanal + NAD(+) + H2O = pentanoate + NADH + 2 H(+). It catalyses the reaction hexanal + NAD(+) + H2O = hexanoate + NADH + 2 H(+). It functions in the pathway amine and polyamine biosynthesis; carnitine biosynthesis. In terms of biological role, converts gamma-trimethylaminobutyraldehyde into gamma-butyrobetaine with high efficiency (in vitro). Can catalyze the irreversible oxidation of a broad range of aldehydes to the corresponding acids in an NAD-dependent reaction, but with low efficiency. Catalyzes the oxidation of aldehydes arising from biogenic amines and polyamines. The polypeptide is 4-trimethylaminobutyraldehyde dehydrogenase (Aldh9a1) (Rattus norvegicus (Rat)).